The primary structure comprises 381 residues: Alkanesulfonate monooxygenase (381 aa).

The protein belongs to the SsuD family. Homotetramer.

The enzyme catalyses an alkanesulfonate + FMNH2 + O2 = an aldehyde + FMN + sulfite + H2O + 2 H(+). Its function is as follows. Catalyzes the desulfonation of aliphatic sulfonates. The protein is Alkanesulfonate monooxygenase of Escherichia coli O127:H6 (strain E2348/69 / EPEC).